Consider the following 208-residue polypeptide: Ribosome maturation factor RimM (208 aa).

In terms of domain architecture, PRC barrel spans 98-205 (ADEFYVPDLI…IIEITPPDGL (108 aa)). Positions 154 to 174 (LPSKSKRSRDTKNQKKNQSPP) are disordered.

It belongs to the RimM family. As to quaternary structure, binds ribosomal protein uS19.

Its subcellular location is the cytoplasm. In terms of biological role, an accessory protein needed during the final step in the assembly of 30S ribosomal subunit, possibly for assembly of the head region. Essential for efficient processing of 16S rRNA. May be needed both before and after RbfA during the maturation of 16S rRNA. It has affinity for free ribosomal 30S subunits but not for 70S ribosomes. The sequence is that of Ribosome maturation factor RimM from Trichodesmium erythraeum (strain IMS101).